The following is a 133-amino-acid chain: Agglutinin alpha chain (133 aa).

The Jacalin-type lectin domain maps to 1–133 (GVTFDDGAYT…LDYFSIYLSL (133 aa)).

It belongs to the jacalin lectin family. As to quaternary structure, formed of four alpha chains and four beta chains.

D-galactose-specific lectin, binds the T-antigen structure Gal-beta1,3-GalNAc. This is Agglutinin alpha chain from Maclura pomifera (Osage orange).